We begin with the raw amino-acid sequence, 353 residues long: Trans-enoyl reductase RAP2 (353 aa).

Residue 46–49 (CDHK) coordinates NADP(+). 131–138 (TGLSTIGM) lines the substrate pocket. Residues 189-192 (SPRN), Y207, and 254-255 (LE) each bind NADP(+). 274–278 (GMALL) is a binding site for substrate. 343-344 (VS) contributes to the NADP(+) binding site.

This sequence belongs to the zinc-containing alcohol dehydrogenase family. In terms of assembly, monomer.

It participates in secondary metabolite biosynthesis. Its function is as follows. Trans-enoyl reductase; part of the gene cluster that mediates the biosynthesis of a tyrosine-derived cytochalasan acting as a fungal signal recognized by resistant rice plants and leads to avirulence in Pi33 resistant rice cultivars. The first step in the pathway is catalyzed by the hybrid PKS-NRPS ACE1, assisted by the enoyl reductase RAP1, that are responsible for fusion of the tyrosine precursor and the polyketide backbone. The polyketide synthase module (PKS) of ACE1 is responsible for the synthesis of the polyketide backbone and the downstream nonribosomal peptide synthetase (NRPS) amidates the carboxyl end of the polyketide with the tyrosine precursor. Because ACE1 lacks a designated enoylreductase (ER) domain, the required activity is provided the enoyl reductase RAP1. Reduction by the hydrolyase ORFZ, followed by dehydration and intra-molecular Diels-Alder cyclization by the Diels-Alderase ORF3 then yield the required isoindolone-fused macrocycle. A number of oxidative steps catalyzed by the tailoring enzymes identified within the cluster, including cytochrome P450 monooxygenases CYP1 to CYP4, the FAD-linked oxidoreductase OXR2 and the short-chain dehydrogenase/reductase OXR1, are further required to afford the final cytochalasans that confer avirulence and which have still to be identified. The monooxygenase CYP1 has been shown to be a site-selective C-18 hydroxylase whereas the function of CYP3 is the site-selective epoxidation of the C-6/C-7 olefin that is present in some intermediate compounds. Finally, SYN2 and RAP2 are not required for avirulence in Pi33 resistant rice cultivars. The chain is Trans-enoyl reductase RAP2 from Pyricularia oryzae (strain 70-15 / ATCC MYA-4617 / FGSC 8958) (Rice blast fungus).